Here is a 662-residue protein sequence, read N- to C-terminus: Eukaryotic peptide chain release factor GTP-binding subunit (662 aa).

The interval 1–220 (MASNQPNNGE…PATVTEDATD (220 aa)) is disordered. Over residues 26-40 (AKAPTFTPKAAPFIP) the composition is skewed to low complexity. Positions 62–89 (YTGQGQNSNSPHPTKSYQQYYQKPTGNT) are enriched in polar residues. The segment covering 91–102 (DEDKSRVPDFSK) has biased composition (basic and acidic residues). Residues 122-134 (GGNTSAPKSTKPI) are compositionally biased toward polar residues. The segment covering 141 to 158 (TKAPTTTKPAAPAAQSKT) has biased composition (low complexity). Position 182 is a phosphothreonine (threonine 182). The segment covering 192–213 (AKTPSAPAAALKKAAEAAEPAT) has biased composition (low complexity). The tr-type G domain maps to 236–464 (KEHVNIVFIG…LDSMTHLERK (229 aa)). A G1 region spans residues 245-252 (GHVDAGKS). 245–252 (GHVDAGKS) is a binding site for GTP. The interval 301-305 (GKTVE) is G2. The segment at 322-325 (DAPG) is G3. GTP is bound by residues 384 to 387 (NKMD) and 428 to 429 (AY). The segment at 384–387 (NKMD) is G4. The G5 stretch occupies residues 427 to 429 (SAY). Serine 539 bears the Phosphoserine mark.

This sequence belongs to the TRAFAC class translation factor GTPase superfamily. Classic translation factor GTPase family. ERF3 subfamily. In terms of assembly, component of the eRF1-eRF3-GTP ternary complex, composed of sup45/eRF1, sup35/eRF3 and GTP.

It localises to the cytoplasm. The enzyme catalyses GTP + H2O = GDP + phosphate + H(+). Functionally, GTPase component of the eRF1-eRF3-GTP ternary complex, a ternary complex that mediates translation termination in response to the termination codons. Sup35/eRF3 mediates sup45/ERF1 delivery to stop codons: The eRF1-eRF3-GTP complex binds to a stop codon in the ribosomal A-site. GTP hydrolysis by sup35/eRF3 induces a conformational change that leads to its dissociation, permitting sup45/eRF1 to accommodate fully in the A-site. The protein is Eukaryotic peptide chain release factor GTP-binding subunit (sup35) of Schizosaccharomyces pombe (strain 972 / ATCC 24843) (Fission yeast).